We begin with the raw amino-acid sequence, 133 residues long: ATP synthase epsilon chain (133 aa).

The protein belongs to the ATPase epsilon chain family. F-type ATPases have 2 components, CF(1) - the catalytic core - and CF(0) - the membrane proton channel. CF(1) has five subunits: alpha(3), beta(3), gamma(1), delta(1), epsilon(1). CF(0) has three main subunits: a, b and c.

The protein localises to the cell membrane. In terms of biological role, produces ATP from ADP in the presence of a proton gradient across the membrane. The polypeptide is ATP synthase epsilon chain (atpC) (Clostridium acetobutylicum (strain ATCC 824 / DSM 792 / JCM 1419 / IAM 19013 / LMG 5710 / NBRC 13948 / NRRL B-527 / VKM B-1787 / 2291 / W)).